Here is a 271-residue protein sequence, read N- to C-terminus: 4-diphosphocytidyl-2-C-methyl-D-erythritol kinase (271 aa).

The active site involves lysine 8. 90–100 contributes to the ATP binding site; it reads PFGAGLGGGSA. Residue aspartate 132 is part of the active site.

The protein belongs to the GHMP kinase family. IspE subfamily.

The catalysed reaction is 4-CDP-2-C-methyl-D-erythritol + ATP = 4-CDP-2-C-methyl-D-erythritol 2-phosphate + ADP + H(+). It participates in isoprenoid biosynthesis; isopentenyl diphosphate biosynthesis via DXP pathway; isopentenyl diphosphate from 1-deoxy-D-xylulose 5-phosphate: step 3/6. Catalyzes the phosphorylation of the position 2 hydroxy group of 4-diphosphocytidyl-2C-methyl-D-erythritol. The sequence is that of 4-diphosphocytidyl-2-C-methyl-D-erythritol kinase from Parabacteroides distasonis (strain ATCC 8503 / DSM 20701 / CIP 104284 / JCM 5825 / NCTC 11152).